The sequence spans 210 residues: Thymidylate kinase (210 aa).

10–17 (GLEGAGKS) contributes to the ATP binding site.

Belongs to the thymidylate kinase family.

It catalyses the reaction dTMP + ATP = dTDP + ADP. Phosphorylation of dTMP to form dTDP in both de novo and salvage pathways of dTTP synthesis. The chain is Thymidylate kinase from Hamiltonella defensa subsp. Acyrthosiphon pisum (strain 5AT).